A 28-amino-acid polypeptide reads, in one-letter code: Metallothionein-like protein type 2 LSC210 (28 aa).

It belongs to the metallothionein superfamily. Type 15 family.

In terms of biological role, metallothioneins have a high content of cysteine residues that bind various heavy metals. The polypeptide is Metallothionein-like protein type 2 LSC210 (LSC210) (Brassica napus (Rape)).